Consider the following 159-residue polypeptide: Cyclic pyranopterin monophosphate synthase (159 aa).

Substrate contacts are provided by residues 75–77 and 113–114; these read LCH and ME. The active site involves Asp-128.

The protein belongs to the MoaC family. Homohexamer; trimer of dimers.

The catalysed reaction is (8S)-3',8-cyclo-7,8-dihydroguanosine 5'-triphosphate = cyclic pyranopterin phosphate + diphosphate. Its pathway is cofactor biosynthesis; molybdopterin biosynthesis. Functionally, catalyzes the conversion of (8S)-3',8-cyclo-7,8-dihydroguanosine 5'-triphosphate to cyclic pyranopterin monophosphate (cPMP). The sequence is that of Cyclic pyranopterin monophosphate synthase from Heliobacterium modesticaldum (strain ATCC 51547 / Ice1).